A 222-amino-acid polypeptide reads, in one-letter code: Phosphoglycolate phosphatase (222 aa).

The active-site Nucleophile is Asp8. 2 residues coordinate Mg(2+): Asp8 and Asp10. Lys150 lines the substrate pocket. Residues Asp173 and Asp177 each coordinate Mg(2+).

Belongs to the archaeal SPP-like hydrolase family. The cofactor is Mg(2+).

The catalysed reaction is 2-phosphoglycolate + H2O = glycolate + phosphate. Functionally, catalyzes the dephosphorylation of 2-phosphoglycolate. The protein is Phosphoglycolate phosphatase of Metallosphaera sedula (strain ATCC 51363 / DSM 5348 / JCM 9185 / NBRC 15509 / TH2).